Consider the following 103-residue polypeptide: Small ribosomal subunit protein uS10 (103 aa).

The protein belongs to the universal ribosomal protein uS10 family. Part of the 30S ribosomal subunit.

In terms of biological role, involved in the binding of tRNA to the ribosomes. In Salinibacter ruber (strain DSM 13855 / M31), this protein is Small ribosomal subunit protein uS10.